A 170-amino-acid chain; its full sequence is Small ribosomal subunit protein mS25 (170 aa).

Belongs to the mitochondrion-specific ribosomal protein mS25 family. Component of the mitochondrial ribosome small subunit (28S) which comprises a 12S rRNA and about 30 distinct proteins.

Its subcellular location is the mitochondrion. The protein is Small ribosomal subunit protein mS25 (mrps-25) of Caenorhabditis elegans.